A 130-amino-acid polypeptide reads, in one-letter code: MAKSLRSKWKRKMRAEKRKKNAPRELNRLKSILRVDGDALMKDVEEIATVVVAKPRQEKMQCEEGRCDGADEEKDDMKMETEIKRNRKTLLDQHGQYPVWMNQRQRKRLKAKREKKRGKSRAKAAKGLAW.

A compositionally biased stretch (basic residues) spans 1 to 21 (MAKSLRSKWKRKMRAEKRKKN). 2 disordered regions span residues 1–23 (MAKSLRSKWKRKMRAEKRKKNAP) and 57–76 (QEKMQCEEGRCDGADEEKDD). Residues 10–78 (KRKMRAEKRK…GADEEKDDMK (69 aa)) adopt a coiled-coil conformation. Residue Lys78 forms a Glycyl lysine isopeptide (Lys-Gly) (interchain with G-Cter in SUMO2) linkage. The span at 104–124 (RQRKRLKAKREKKRGKSRAKA) shows a compositional bias: basic residues. The segment at 104–130 (RQRKRLKAKREKKRGKSRAKAAKGLAW) is disordered.

This sequence belongs to the learning-associated protein family. Interacts with CTCF, MYO1C and with the transcriptional machinery, including RNA polymerase II and TBP. In terms of tissue distribution, widely expressed, with high levels in testis and spleen and low levels in heart. In the brain, expressed in the cortex and hippocampus, and at very low levels in the cerebellum.

It is found in the nucleus. The protein localises to the nucleolus. It localises to the chromosome. In terms of biological role, in hippocampal neurons, regulates dendritic and spine growth and synaptic transmission. This chain is Protein LLP homolog (Llph), found in Mus musculus (Mouse).